We begin with the raw amino-acid sequence, 195 residues long: Pyruvoyl-dependent arginine decarboxylase AaxB (195 aa).

Residue S53 is modified to Pyruvic acid (Ser).

The protein belongs to the pyruvoyl-dependent arginine decarboxylase family. Trimer of an alpha-beta dimer. Requires pyruvate as cofactor.

The protein resides in the cytoplasm. It catalyses the reaction L-arginine + H(+) = agmatine + CO2. Part of the AaxABC system, catalyzes the decarboxylation of L-arginine. The arginine uptake by the bacterium in the macrophage may be a virulence factor against the host innate immune response. The polypeptide is Pyruvoyl-dependent arginine decarboxylase AaxB (aaxB) (Chlamydia muridarum (strain MoPn / Nigg)).